The primary structure comprises 180 residues: ATP-dependent protease subunit HslV (180 aa).

Residue threonine 8 is part of the active site. 3 residues coordinate Na(+): alanine 165, cysteine 168, and threonine 171.

This sequence belongs to the peptidase T1B family. HslV subfamily. A double ring-shaped homohexamer of HslV is capped on each side by a ring-shaped HslU homohexamer. The assembly of the HslU/HslV complex is dependent on binding of ATP.

The protein resides in the cytoplasm. The catalysed reaction is ATP-dependent cleavage of peptide bonds with broad specificity.. Its activity is regulated as follows. Allosterically activated by HslU binding. Functionally, protease subunit of a proteasome-like degradation complex believed to be a general protein degrading machinery. This Staphylococcus epidermidis (strain ATCC 12228 / FDA PCI 1200) protein is ATP-dependent protease subunit HslV.